Reading from the N-terminus, the 375-residue chain is Period circadian protein (375 aa).

Disordered stretches follow at residues 28–118, 140–189, and 220–254; these read TAPV…AVTP, KHRE…WEGE, and CQAS…NQYA. Positions 69-91 are enriched in low complexity; that stretch reads SGNFTTGSNLHMSSVTNTSNAGT. Gly residues predominate over residues 92–113; the sequence is GTSGTGNSGGGGGGGGGGGPGN. Residues 145-156 are compositionally biased toward basic and acidic residues; that stretch reads RGRSGEKNKKSA. Over residues 224-243 the composition is skewed to gly residues; it reads GAGGGGSGSVGGTGNIGSGG. Residues 245-254 are compositionally biased toward polar residues; it reads NAQPSTNQYA.

Forms a heterodimer with timeless (TIM); the complex then translocates into the nucleus. Post-translationally, phosphorylated with a circadian rhythmicity, probably by the double-time protein (dbt). Phosphorylation could be implicated in the stability of per monomer and in the formation of heterodimer per-tim.

It is found in the nucleus. The protein localises to the cytoplasm. Its subcellular location is the perinuclear region. Functionally, essential for biological clock functions. Determines the period length of circadian and ultradian rhythms; an increase in PER dosage leads to shortened circadian rhythms and a decrease leads to lengthened circadian rhythms. Essential for the circadian rhythmicity of locomotor activity, eclosion behavior, and for the rhythmic component of the male courtship song that originates in the thoracic nervous system. The biological cycle depends on the rhythmic formation and nuclear localization of the TIM-PER complex. Light induces the degradation of TIM, which promotes elimination of PER. Nuclear activity of the heterodimer coordinatively regulates PER and TIM transcription through a negative feedback loop. Behaves as a negative element in circadian transcriptional loop. Does not appear to bind DNA, suggesting indirect transcriptional inhibition. The chain is Period circadian protein (per) from Drosophila capricorni (Fruit fly).